The chain runs to 546 residues: Pre-mRNA-splicing factor 38B (546 aa).

The segment covering 1 to 14 has biased composition (polar residues); it reads MANNSPALTGNSQP. Positions 1 to 40 are disordered; it reads MANNSPALTGNSQPQHQAAAAAAQQQQQCGGGGATKPAVS. Position 2 is an N-acetylalanine (alanine 2). Serine 5 is modified (phosphoserine). A compositionally biased stretch (low complexity) spans 15–28; that stretch reads QHQAAAAAAQQQQQ. Residue lysine 227 is modified to N6-acetyllysine. The segment at 229-546 is disordered; sequence IDQQIKTRPR…KQHKNKDETV (318 aa). The segment covering 243 to 255 has biased composition (basic and acidic residues); that stretch reads DGKEGAEEIDRHV. The segment covering 256 to 284 has biased composition (basic residues); that stretch reads ERRRSRSPRRSLSPRRSPRRSRSRSHHRE. Phosphoserine occurs at positions 288, 290, 318, and 320. Basic and acidic residues predominate over residues 291-327; it reads FDRELEREKERQRLEREAKEREKERRRSRSIDRGLER. Positions 292 to 321 form a coiled coil; that stretch reads DRELEREKERQRLEREAKEREKERRRSRSI. A compositionally biased stretch (basic residues) spans 328–344; sequence RRSRSRERHRSRSRSRD. Basic and acidic residues predominate over residues 345–421; it reads RKGDRRDRDR…HRDDKRDSKK (77 aa). A compositionally biased stretch (basic residues) spans 422-450; the sequence is EKKHSRSRSRERKHRSRSRSRNAGKRSRS. Serine 448 is subject to Phosphoserine. A compositionally biased stretch (basic and acidic residues) spans 451–468; it reads RSKEKSSKHKNESKEKSN. Serine 473, serine 475, and serine 481 each carry phosphoserine. A compositionally biased stretch (basic and acidic residues) spans 480 to 495; the sequence is DSVEKSKKREHSPSKE. Residues 496-510 are compositionally biased toward basic residues; it reads KSRKRSRSKERSHKR. The span at 511–546 shows a compositional bias: basic and acidic residues; it reads DHSDSKDQSDKHDRRRSQSIEQESQEKQHKNKDETV. Phosphoserine occurs at positions 527, 529, and 534.

The protein belongs to the PRP38 family.

It is found in the nucleus. May be required for pre-mRNA splicing. The protein is Pre-mRNA-splicing factor 38B (PRPF38B) of Homo sapiens (Human).